Here is an 828-residue protein sequence, read N- to C-terminus: Glycerol-3-phosphate acyltransferase (828 aa).

The short motif at 309-314 is the HXXXXD motif element; that stretch reads CHRSHI.

This sequence belongs to the GPAT/DAPAT family.

It is found in the cell inner membrane. It catalyses the reaction sn-glycerol 3-phosphate + an acyl-CoA = a 1-acyl-sn-glycero-3-phosphate + CoA. The protein operates within phospholipid metabolism; CDP-diacylglycerol biosynthesis; CDP-diacylglycerol from sn-glycerol 3-phosphate: step 1/3. In Pseudomonas putida (strain W619), this protein is Glycerol-3-phosphate acyltransferase.